Consider the following 392-residue polypeptide: Potassium/proton antiporter CemA (392 aa).

4 consecutive transmembrane segments (helical) span residues 174-194 (FLAS…VWWL), 269-289 (SLAN…MLSL), 316-336 (FLIL…WEVI), and 352-372 (FIFM…KYWI).

This sequence belongs to the CemA family.

The protein localises to the plastid. Its subcellular location is the chloroplast inner membrane. The catalysed reaction is K(+)(in) + H(+)(out) = K(+)(out) + H(+)(in). Its function is as follows. Contributes to K(+)/H(+) antiport activity by supporting proton efflux to control proton extrusion and homeostasis in chloroplasts in a light-dependent manner to modulate photosynthesis. Prevents excessive induction of non-photochemical quenching (NPQ) under continuous-light conditions. Indirectly promotes efficient inorganic carbon uptake into chloroplasts. The sequence is that of Potassium/proton antiporter CemA from Nephroselmis olivacea (Green alga).